Here is a 139-residue protein sequence, read N- to C-terminus: Small ribosomal subunit protein uS12 (139 aa).

Position 102 is a 3-methylthioaspartic acid (Asp-102).

The protein belongs to the universal ribosomal protein uS12 family. As to quaternary structure, part of the 30S ribosomal subunit. Contacts proteins S8 and S17. May interact with IF1 in the 30S initiation complex.

In terms of biological role, with S4 and S5 plays an important role in translational accuracy. Functionally, interacts with and stabilizes bases of the 16S rRNA that are involved in tRNA selection in the A site and with the mRNA backbone. Located at the interface of the 30S and 50S subunits, it traverses the body of the 30S subunit contacting proteins on the other side and probably holding the rRNA structure together. The combined cluster of proteins S8, S12 and S17 appears to hold together the shoulder and platform of the 30S subunit. This chain is Small ribosomal subunit protein uS12, found in Phytoplasma australiense.